We begin with the raw amino-acid sequence, 138 residues long: Large ribosomal subunit protein uL16 (138 aa).

Positions 1 to 15 (MLSPRKVKYRKKQRG) are enriched in basic residues. The tract at residues 1 to 21 (MLSPRKVKYRKKQRGRLSGEA) is disordered.

It belongs to the universal ribosomal protein uL16 family. In terms of assembly, part of the 50S ribosomal subunit.

In terms of biological role, binds 23S rRNA and is also seen to make contacts with the A and possibly P site tRNAs. This Borrelia recurrentis (strain A1) protein is Large ribosomal subunit protein uL16.